A 309-amino-acid polypeptide reads, in one-letter code: MVYFLLIILSILVVFAFVLGNFSNGFVALVNVIDWVKTRKISSADQILTALVVSRIGLLWVILFHWYANVFNSALYSSEVGAVASNISAIINHFSIWLAASLGIFYLLKIANFSNLIFLHLKKRIRSVVLVILLGPLVFLICNLAVITMDERVWTKEYEGNVTWKIKLRNAIHLSDLTVSTLANLIPFILTLICFLLLICSLHKHLKKMQLHGKGSQDLSTKVHIKALQTVISFLMLYAIYFLYLITLTWNLWTQQNKLVFLLCQTLGIMYPSFHSFFLIMGSRKLKQTFLSVLCQVTCLVKGQQPSTP.

Residues 1–3 (MVY) are Extracellular-facing. Residues 4-26 (FLLIILSILVVFAFVLGNFSNGF) form a helical membrane-spanning segment. At 27–46 (VALVNVIDWVKTRKISSADQ) the chain is on the cytoplasmic side. The chain crosses the membrane as a helical span at residues 47-69 (ILTALVVSRIGLLWVILFHWYAN). Over 70–83 (VFNSALYSSEVGAV) the chain is Extracellular. The helical transmembrane segment at 84–106 (ASNISAIINHFSIWLAASLGIFY) threads the bilayer. Residues 107–126 (LLKIANFSNLIFLHLKKRIR) are Cytoplasmic-facing. The helical transmembrane segment at 127-149 (SVVLVILLGPLVFLICNLAVITM) threads the bilayer. The Extracellular portion of the chain corresponds to 150 to 176 (DERVWTKEYEGNVTWKIKLRNAIHLSD). The N-linked (GlcNAc...) asparagine glycan is linked to Asn161. The helical transmembrane segment at 177–199 (LTVSTLANLIPFILTLICFLLLI) threads the bilayer. At 200 to 230 (CSLHKHLKKMQLHGKGSQDLSTKVHIKALQT) the chain is on the cytoplasmic side. Residues 231–253 (VISFLMLYAIYFLYLITLTWNLW) traverse the membrane as a helical segment. Residues 254-258 (TQQNK) lie on the Extracellular side of the membrane. Residues 259–281 (LVFLLCQTLGIMYPSFHSFFLIM) form a helical membrane-spanning segment. Residues 282–309 (GSRKLKQTFLSVLCQVTCLVKGQQPSTP) lie on the Cytoplasmic side of the membrane.

The protein belongs to the G-protein coupled receptor T2R family.

It is found in the membrane. In terms of biological role, receptor that may play a role in the perception of bitterness and is gustducin-linked. May play a role in sensing the chemical composition of the gastrointestinal content. The activity of this receptor may stimulate alpha gustducin, mediate PLC-beta-2 activation and lead to the gating of TRPM5. This Pan paniscus (Pygmy chimpanzee) protein is Taste receptor type 2 member 64 (TAS2R64).